The chain runs to 319 residues: Ornithine carbamoyltransferase (319 aa).

Residues 55-58 (STRT), Q82, R106, and 133-136 (HPCQ) each bind carbamoyl phosphate. Residues N171, D234, and 238 to 239 (SM) each bind L-ornithine. Carbamoyl phosphate-binding positions include 274 to 275 (CL) and R302.

It belongs to the aspartate/ornithine carbamoyltransferase superfamily. OTCase family.

It localises to the cytoplasm. The enzyme catalyses carbamoyl phosphate + L-ornithine = L-citrulline + phosphate + H(+). It participates in amino-acid biosynthesis; L-arginine biosynthesis; L-arginine from L-ornithine and carbamoyl phosphate: step 1/3. In terms of biological role, reversibly catalyzes the transfer of the carbamoyl group from carbamoyl phosphate (CP) to the N(epsilon) atom of ornithine (ORN) to produce L-citrulline. In Corynebacterium diphtheriae (strain ATCC 700971 / NCTC 13129 / Biotype gravis), this protein is Ornithine carbamoyltransferase.